Consider the following 246-residue polypeptide: Phosphomannomutase 2 (246 aa).

Ala-2 is subject to N-acetylalanine. Residue Asp-12 is the Nucleophile of the active site. The Mg(2+) site is built by Asp-12 and Asp-14. Asp-14 acts as the Proton donor/acceptor in catalysis. Alpha-D-mannose 1-phosphate-binding residues include Arg-21, Arg-123, Arg-134, and Arg-141. Residue Lys-149 is modified to N6-acetyllysine. Positions 179 and 181 each coordinate alpha-D-mannose 1-phosphate. Asp-209, Phe-221, Asp-223, and Thr-226 together coordinate Mg(2+).

It belongs to the eukaryotic PMM family. Homodimer.

The protein resides in the cytoplasm. The catalysed reaction is alpha-D-mannose 1-phosphate = D-mannose 6-phosphate. Its pathway is nucleotide-sugar biosynthesis; GDP-alpha-D-mannose biosynthesis; alpha-D-mannose 1-phosphate from D-fructose 6-phosphate: step 2/2. Its function is as follows. Involved in the synthesis of the GDP-mannose and dolichol-phosphate-mannose required for a number of critical mannosyl transfer reactions. This is Phosphomannomutase 2 (PMM2) from Homo sapiens (Human).